The chain runs to 106 residues: Trp operon repressor homolog (106 aa).

Residues 59 to 82 (QREIQQILNTSAATITRGSNMIKI) mediate DNA binding.

The protein belongs to the TrpR family. As to quaternary structure, homodimer.

The protein resides in the cytoplasm. In terms of biological role, this protein is an aporepressor. When complexed with L-tryptophan it binds the operator region of the trp operon and prevents the initiation of transcription. In Histophilus somni (strain 2336) (Haemophilus somnus), this protein is Trp operon repressor homolog.